The sequence spans 1059 residues: Isoleucine--tRNA ligase (1059 aa).

The 'HIGH' region motif lies at 47–57 (PYTTGHIHLGT). The 'KMSKS' region motif lies at 591–595 (KMSKS). Lys594 contributes to the ATP binding site.

Belongs to the class-I aminoacyl-tRNA synthetase family. IleS type 2 subfamily. As to quaternary structure, monomer. It depends on Zn(2+) as a cofactor.

The protein localises to the cytoplasm. It carries out the reaction tRNA(Ile) + L-isoleucine + ATP = L-isoleucyl-tRNA(Ile) + AMP + diphosphate. Catalyzes the attachment of isoleucine to tRNA(Ile). As IleRS can inadvertently accommodate and process structurally similar amino acids such as valine, to avoid such errors it has two additional distinct tRNA(Ile)-dependent editing activities. One activity is designated as 'pretransfer' editing and involves the hydrolysis of activated Val-AMP. The other activity is designated 'posttransfer' editing and involves deacylation of mischarged Val-tRNA(Ile). The chain is Isoleucine--tRNA ligase from Methanoculleus marisnigri (strain ATCC 35101 / DSM 1498 / JR1).